The primary structure comprises 200 residues: Peptidyl-tRNA hydrolase (200 aa).

Tyrosine 14 lines the tRNA pocket. The Proton acceptor role is filled by histidine 19. Positions 64, 66, and 112 each coordinate tRNA.

It belongs to the PTH family. In terms of assembly, monomer.

It is found in the cytoplasm. It carries out the reaction an N-acyl-L-alpha-aminoacyl-tRNA + H2O = an N-acyl-L-amino acid + a tRNA + H(+). Hydrolyzes ribosome-free peptidyl-tRNAs (with 1 or more amino acids incorporated), which drop off the ribosome during protein synthesis, or as a result of ribosome stalling. Functionally, catalyzes the release of premature peptidyl moieties from peptidyl-tRNA molecules trapped in stalled 50S ribosomal subunits, and thus maintains levels of free tRNAs and 50S ribosomes. The sequence is that of Peptidyl-tRNA hydrolase from Maricaulis maris (strain MCS10) (Caulobacter maris).